The sequence spans 376 residues: Nuclear egress protein 1 (376 aa).

At Ser-19 the chain carries Phosphoserine. Positions 22–57 are disordered; that stretch reads RKRRQRELASKVASTVNGATSANNHGEPPSPADARP. The segment covering 33 to 45 has biased composition (polar residues); it reads VASTVNGATSANN. Residues 106 to 211 form a CCCH-type zinc finger; the sequence is CLDISPYGNE…HVIFENSDVH (106 aa). A disordered region spans residues 316–376; sequence VVSTNGCGPS…PLFLNSIRAP (61 aa). Residues 317-332 show a composition bias toward polar residues; it reads VSTNGCGPSSSSQSTP.

The protein belongs to the herpesviridae NEC1 protein family. Forms a heterohexameric complex with NEC2. Interacts with capsid vertex specific component 2/CVC2; this interaction directs the capsid to the host inner nuclear membrane to initiate budding. Post-translationally, phosphorylated at serine residues in the N-terminus. This phosphorylation regulates the localization within the inner nuclear membrane. Phosphorylation by viral kinase UL97 at Ser-19 plays an important role for correct viral nuclear egress complex (NEC) localization.

The protein resides in the host nucleus inner membrane. In terms of biological role, plays an essential role in virion nuclear egress, the first step of virion release from infected cell. Within the host nucleus, NEC1 interacts with the newly formed capsid through the vertexes and directs it to the inner nuclear membrane by associating with NEC2. Induces the budding of the capsid at the inner nuclear membrane as well as its envelopment into the perinuclear space. There, the NEC1/NEC2 complex promotes the fusion of the enveloped capsid with the outer nuclear membrane and the subsequent release of the viral capsid into the cytoplasm where it will reach the secondary budding sites in the host Golgi or trans-Golgi network. In Homo sapiens (Human), this protein is Nuclear egress protein 1.